A 234-amino-acid polypeptide reads, in one-letter code: N-acetyl-alpha-D-glucosaminyl L-malate deacetylase 1 (234 aa).

Zn(2+) is bound by residues histidine 12, aspartate 15, and histidine 113.

This sequence belongs to the PIGL family. The cofactor is Zn(2+).

The enzyme catalyses (S)-malyl N-acetyl-alpha-D-glucosaminide + H2O = (S)-malyl alpha-D-glucosaminide + acetate. With respect to regulation, inhibited by BSH. In terms of biological role, involved in bacillithiol (BSH) biosynthesis. Catalyzes the second step of the pathway, the deacetylation of N-acetylglucosaminylmalate (GlcNAc-Mal) to glucosamine malate (GlcN-Mal). The protein is N-acetyl-alpha-D-glucosaminyl L-malate deacetylase 1 of Bacillus anthracis.